The chain runs to 328 residues: 4-hydroxy-3-methylbut-2-enyl diphosphate reductase (328 aa).

C13 is a binding site for [4Fe-4S] cluster. (2E)-4-hydroxy-3-methylbut-2-enyl diphosphate contacts are provided by H41 and H75. Residues H41 and H75 each contribute to the dimethylallyl diphosphate site. Isopentenyl diphosphate contacts are provided by H41 and H75. C97 is a [4Fe-4S] cluster binding site. H125 contacts (2E)-4-hydroxy-3-methylbut-2-enyl diphosphate. H125 contacts dimethylallyl diphosphate. H125 provides a ligand contact to isopentenyl diphosphate. The active-site Proton donor is E127. (2E)-4-hydroxy-3-methylbut-2-enyl diphosphate is bound at residue T168. C229 lines the [4Fe-4S] cluster pocket. Positions 257, 258, 259, and 306 each coordinate (2E)-4-hydroxy-3-methylbut-2-enyl diphosphate. Dimethylallyl diphosphate is bound by residues S257, S258, N259, and S306. Residues S257, S258, N259, and S306 each contribute to the isopentenyl diphosphate site.

Belongs to the IspH family. The cofactor is [4Fe-4S] cluster.

It catalyses the reaction isopentenyl diphosphate + 2 oxidized [2Fe-2S]-[ferredoxin] + H2O = (2E)-4-hydroxy-3-methylbut-2-enyl diphosphate + 2 reduced [2Fe-2S]-[ferredoxin] + 2 H(+). The catalysed reaction is dimethylallyl diphosphate + 2 oxidized [2Fe-2S]-[ferredoxin] + H2O = (2E)-4-hydroxy-3-methylbut-2-enyl diphosphate + 2 reduced [2Fe-2S]-[ferredoxin] + 2 H(+). Its pathway is isoprenoid biosynthesis; dimethylallyl diphosphate biosynthesis; dimethylallyl diphosphate from (2E)-4-hydroxy-3-methylbutenyl diphosphate: step 1/1. It functions in the pathway isoprenoid biosynthesis; isopentenyl diphosphate biosynthesis via DXP pathway; isopentenyl diphosphate from 1-deoxy-D-xylulose 5-phosphate: step 6/6. Catalyzes the conversion of 1-hydroxy-2-methyl-2-(E)-butenyl 4-diphosphate (HMBPP) into a mixture of isopentenyl diphosphate (IPP) and dimethylallyl diphosphate (DMAPP). Acts in the terminal step of the DOXP/MEP pathway for isoprenoid precursor biosynthesis. In Chlorobium phaeobacteroides (strain DSM 266 / SMG 266 / 2430), this protein is 4-hydroxy-3-methylbut-2-enyl diphosphate reductase.